A 99-amino-acid chain; its full sequence is Cytochrome c oxidase subunit 4 isoform 1, mitochondrial (99 aa).

Residues 1–73 (SVVKSEDFTL…SFAEMNRRSN (73 aa)) lie on the Mitochondrial matrix side of the membrane. Residue Lys4 is modified to N6-acetyllysine; alternate. Position 4 is an N6-succinyllysine; alternate (Lys4). At Lys28 the chain carries N6-acetyllysine. Residues Ser31 and Ser33 each carry the phosphoserine modification. Lys35 is subject to N6-acetyllysine; alternate. The residue at position 35 (Lys35) is an N6-succinyllysine; alternate. An N6-acetyllysine modification is found at Lys42. Residues 74–99 (EWKTVVGTAMFFIGITALVIMWEKLY) form a helical membrane-spanning segment.

The protein belongs to the cytochrome c oxidase IV family. Component of the cytochrome c oxidase (complex IV, CIV), a multisubunit enzyme composed of 14 subunits. The complex is composed of a catalytic core of 3 subunits MT-CO1, MT-CO2 and MT-CO3, encoded in the mitochondrial DNA, and 11 supernumerary subunits COX4I, COX5A, COX5B, COX6A, COX6B, COX6C, COX7A, COX7B, COX7C, COX8 and NDUFA4, which are encoded in the nuclear genome. The complex exists as a monomer or a dimer and forms supercomplexes (SCs) in the inner mitochondrial membrane with NADH-ubiquinone oxidoreductase (complex I, CI) and ubiquinol-cytochrome c oxidoreductase (cytochrome b-c1 complex, complex III, CIII), resulting in different assemblies (supercomplex SCI(1)III(2)IV(1) and megacomplex MCI(2)III(2)IV(2)). Interacts with PHB2; the interaction decreases in absence of SPHK2. Interacts with AFG1L. Interacts with ABCB7; this interaction allows the regulation of cellular iron homeostasis and cellular reactive oxygen species (ROS) levels in cardiomyocytes. Interacts with FLVCR2; this interaction occurs in the absence of heme and is disrupted upon heme binding. Interacts with IRGC.

Its subcellular location is the mitochondrion inner membrane. Its pathway is energy metabolism; oxidative phosphorylation. Its function is as follows. Component of the cytochrome c oxidase, the last enzyme in the mitochondrial electron transport chain which drives oxidative phosphorylation. The respiratory chain contains 3 multisubunit complexes succinate dehydrogenase (complex II, CII), ubiquinol-cytochrome c oxidoreductase (cytochrome b-c1 complex, complex III, CIII) and cytochrome c oxidase (complex IV, CIV), that cooperate to transfer electrons derived from NADH and succinate to molecular oxygen, creating an electrochemical gradient over the inner membrane that drives transmembrane transport and the ATP synthase. Cytochrome c oxidase is the component of the respiratory chain that catalyzes the reduction of oxygen to water. Electrons originating from reduced cytochrome c in the intermembrane space (IMS) are transferred via the dinuclear copper A center (CU(A)) of subunit 2 and heme A of subunit 1 to the active site in subunit 1, a binuclear center (BNC) formed by heme A3 and copper B (CU(B)). The BNC reduces molecular oxygen to 2 water molecules using 4 electrons from cytochrome c in the IMS and 4 protons from the mitochondrial matrix. The protein is Cytochrome c oxidase subunit 4 isoform 1, mitochondrial (COX4I1) of Mandrillus sphinx (Mandrill).